We begin with the raw amino-acid sequence, 231 residues long: uncharacterized protein (231 aa).

The N-terminal stretch at 1 to 25 is a signal peptide; the sequence is MAKWVPALLLRRVPLFSLRFRPASS. Residues 26-200 are Extracellular-facing; sequence TFLPVLAATE…SRPSPSATLT (175 aa). The disordered stretch occupies residues 39 to 64; it reads SVPSGDLSMPVKTRAEGEDDGFGEAG. A helical membrane pass occupies residues 201–225; that stretch reads LLLASSCLLAPAPPSFILLLFTLIA. Residues 226–231 lie on the Cytoplasmic side of the membrane; that stretch reads PDLPHS.

The protein resides in the membrane. This is an uncharacterized protein from Homo sapiens (Human).